Here is a 253-residue protein sequence, read N- to C-terminus: MAHYKVEQDDWLTVYLKYLLFIFNFFFWVGGAAVMAVGVWTLVEKSGYLGVLASSTFAASAYILIFAGALVMVTGFLGFGAVIREDRGCLSAYFCLLLAIFLVELVAGVLAHVYYQRLSDELKQHLTRTLAENYRQPGAAEITASVDRLQQDFKCCGSNSSADWLQSSYILSPEAEGRRVPDSCCKTVVARCGQRAHPSNIYKVEGGCISKLEQFLADHLLLMGAVGIGVACLQICGMILTCGLHRRLQLHFY.

4 helical membrane passes run 19-39, 63-83, 90-110, and 220-240; these read LLFI…AVGV, ILIF…GAVI, LSAY…AGVL, and LLLM…GMIL.

Belongs to the tetraspanin (TM4SF) family.

It is found in the membrane. This is Tetraspanin-11 (TSPAN11) from Bos taurus (Bovine).